The sequence spans 207 residues: Dephospho-CoA kinase (207 aa).

The DPCK domain maps to A5 to F203. A13 to L18 lines the ATP pocket.

It belongs to the CoaE family.

The protein resides in the cytoplasm. It carries out the reaction 3'-dephospho-CoA + ATP = ADP + CoA + H(+). The protein operates within cofactor biosynthesis; coenzyme A biosynthesis; CoA from (R)-pantothenate: step 5/5. Functionally, catalyzes the phosphorylation of the 3'-hydroxyl group of dephosphocoenzyme A to form coenzyme A. The chain is Dephospho-CoA kinase from Xylella fastidiosa (strain 9a5c).